The chain runs to 413 residues: Multifunctional CCA protein (413 aa).

The ATP site is built by Gly8 and Arg11. Gly8 and Arg11 together coordinate CTP. Mg(2+) contacts are provided by Asp21 and Asp23. 3 residues coordinate ATP: Arg91, Arg137, and Arg140. CTP contacts are provided by Arg91, Arg137, and Arg140. The HD domain maps to 228 to 329 (TGIHTLMVLE…VKLFDKADLW (102 aa)).

It belongs to the tRNA nucleotidyltransferase/poly(A) polymerase family. Bacterial CCA-adding enzyme type 1 subfamily. In terms of assembly, monomer. Can also form homodimers and oligomers. The cofactor is Mg(2+). It depends on Ni(2+) as a cofactor.

It catalyses the reaction a tRNA precursor + 2 CTP + ATP = a tRNA with a 3' CCA end + 3 diphosphate. It carries out the reaction a tRNA with a 3' CCA end + 2 CTP + ATP = a tRNA with a 3' CCACCA end + 3 diphosphate. Functionally, catalyzes the addition and repair of the essential 3'-terminal CCA sequence in tRNAs without using a nucleic acid template. Adds these three nucleotides in the order of C, C, and A to the tRNA nucleotide-73, using CTP and ATP as substrates and producing inorganic pyrophosphate. tRNA 3'-terminal CCA addition is required both for tRNA processing and repair. Also involved in tRNA surveillance by mediating tandem CCA addition to generate a CCACCA at the 3' terminus of unstable tRNAs. While stable tRNAs receive only 3'-terminal CCA, unstable tRNAs are marked with CCACCA and rapidly degraded. The protein is Multifunctional CCA protein of Shewanella loihica (strain ATCC BAA-1088 / PV-4).